A 343-amino-acid chain; its full sequence is LRP2-binding protein (343 aa).

One copy of the TPR repeat lies at 58-91 (SQATFLLGQLHYVQGCYAEAELIFDRIKDKDPQA). 6 Sel1-like repeats span residues 92–124 (LYQLAVIYYDGLGTKEDLGRAVEYMGRVAFWDS), 132–167 (YAALYNLGQAYLEGFGVQASSSEAERLWLLAADNGN), 172–205 (VKAQSALGMFYSRPESLDLRKAFFWHSQACGNGS), 206–241 (LESQAALGLMYLYGHGVQRDSDSALFCLKEAAERGS), 242–273 (VYAQGHLTACYYRRQLYSRAAALGQRVCEYKD), and 293–328 (AIGMFYYARCLHLGRGVPQNRDKAKHYCTQAVRIDP).

The protein localises to the cytoplasm. Functionally, may act as an adapter that regulates LRP2 function. The sequence is that of LRP2-binding protein (lrp2bp) from Danio rerio (Zebrafish).